An 869-amino-acid chain; its full sequence is Bifunctional uridylyltransferase/uridylyl-removing enzyme (869 aa).

Positions 1 to 332 are uridylyltransferase; that stretch reads MTATPADRPD…QFDGEAVPVQ (332 aa). Residues 333 to 691 form a uridylyl-removing region; the sequence is LDAGFSLRRG…RRAVPDNDAL (359 aa). An HD domain is found at 450–572; that stretch reads VDQHTLMVLR…VGTRERLDYL (123 aa). ACT domains lie at 692 to 771 and 798 to 869; these read EVFV…PSRR and RISL…LDPT.

This sequence belongs to the GlnD family. It depends on Mg(2+) as a cofactor.

It catalyses the reaction [protein-PII]-L-tyrosine + UTP = [protein-PII]-uridylyl-L-tyrosine + diphosphate. The enzyme catalyses [protein-PII]-uridylyl-L-tyrosine + H2O = [protein-PII]-L-tyrosine + UMP + H(+). Its activity is regulated as follows. Uridylyltransferase (UTase) activity is inhibited by glutamine, while glutamine activates uridylyl-removing (UR) activity. In terms of biological role, modifies, by uridylylation and deuridylylation, the PII regulatory proteins (GlnB and homologs), in response to the nitrogen status of the cell that GlnD senses through the glutamine level. Under low glutamine levels, catalyzes the conversion of the PII proteins and UTP to PII-UMP and PPi, while under higher glutamine levels, GlnD hydrolyzes PII-UMP to PII and UMP (deuridylylation). Thus, controls uridylylation state and activity of the PII proteins, and plays an important role in the regulation of nitrogen assimilation and metabolism. In Xanthomonas campestris pv. campestris (strain B100), this protein is Bifunctional uridylyltransferase/uridylyl-removing enzyme.